We begin with the raw amino-acid sequence, 299 residues long: Nitrogenase iron protein (299 aa).

8 to 15 (GKGGIGKS) provides a ligand contact to ATP. Cys-96 serves as a coordination point for [4Fe-4S] cluster. ADP-ribosylarginine; by dinitrogenase reductase ADP-ribosyltransferase is present on Arg-99. Cys-130 provides a ligand contact to [4Fe-4S] cluster.

It belongs to the NifH/BchL/ChlL family. In terms of assembly, homodimer. It depends on [4Fe-4S] cluster as a cofactor. The reversible ADP-ribosylation of Arg-99 inactivates the nitrogenase reductase and regulates nitrogenase activity.

The enzyme catalyses N2 + 8 reduced [2Fe-2S]-[ferredoxin] + 16 ATP + 16 H2O = H2 + 8 oxidized [2Fe-2S]-[ferredoxin] + 2 NH4(+) + 16 ADP + 16 phosphate + 6 H(+). Functionally, the key enzymatic reactions in nitrogen fixation are catalyzed by the nitrogenase complex, which has 2 components: the iron protein and the molybdenum-iron protein. The polypeptide is Nitrogenase iron protein (Gloeothece citriformis (strain PCC 7424) (Cyanothece sp. (strain PCC 7424))).